The following is an 83-amino-acid chain: MGSLSPWHWAILAVVVIVLFGAKKLPDAARSLGKSLRIFKSEVRELQNENKAEASIETPTPVQSQRVDPSAASGQDSTEARPA.

Residues 1 to 21 (MGSLSPWHWAILAVVVIVLFG) form a helical membrane-spanning segment. The tract at residues 48 to 83 (NENKAEASIETPTPVQSQRVDPSAASGQDSTEARPA) is disordered. The segment covering 57 to 77 (ETPTPVQSQRVDPSAASGQDS) has biased composition (polar residues).

It belongs to the TatA/E family. As to quaternary structure, the Tat system comprises two distinct complexes: a TatABC complex, containing multiple copies of TatA, TatB and TatC subunits, and a separate TatA complex, containing only TatA subunits. Substrates initially bind to the TatABC complex, which probably triggers association of the separate TatA complex to form the active translocon.

The protein localises to the cell membrane. Functionally, part of the twin-arginine translocation (Tat) system that transports large folded proteins containing a characteristic twin-arginine motif in their signal peptide across membranes. TatA could form the protein-conducting channel of the Tat system. The polypeptide is Sec-independent protein translocase protein TatA (Mycobacterium bovis (strain BCG / Pasteur 1173P2)).